Reading from the N-terminus, the 496-residue chain is NADH-ubiquinone oxidoreductase 51 kDa subunit, mitochondrial (496 aa).

The N-terminal 30 residues, 1–30 (MISRAAAPSSSIASLSSRSLRAQAPAARSF), are a transit peptide targeting the mitochondrion. 98 to 107 (GRGGAGFPSG) is a binding site for NAD(+). 214 to 261 (GMGAYVCGEETSLIESIEGKAGKPRLKPPFPAAVGLFGCPSTVTNVET) is a binding site for FMN. Residues Cys-393, Cys-396, Cys-399, and Cys-439 each contribute to the [4Fe-4S] cluster site.

The protein belongs to the complex I 51 kDa subunit family. As to quaternary structure, complex I is composed of about 40 different subunits. This is a component of the flavoprotein-sulfur (FP) fragment of the enzyme. The cofactor is FMN. Requires [4Fe-4S] cluster as cofactor.

It localises to the mitochondrion inner membrane. The catalysed reaction is a ubiquinone + NADH + 5 H(+)(in) = a ubiquinol + NAD(+) + 4 H(+)(out). Its function is as follows. Core subunit of the mitochondrial membrane respiratory chain NADH dehydrogenase (Complex I) that is believed to belong to the minimal assembly required for catalysis. Complex I functions in the transfer of electrons from NADH to the respiratory chain. The immediate electron acceptor for the enzyme is believed to be ubiquinone. The chain is NADH-ubiquinone oxidoreductase 51 kDa subunit, mitochondrial (NUO51) from Aspergillus niger.